The following is a 239-amino-acid chain: tRNA1(Val) (adenine(37)-N6)-methyltransferase (239 aa).

The protein belongs to the methyltransferase superfamily. tRNA (adenine-N(6)-)-methyltransferase family.

The protein resides in the cytoplasm. The enzyme catalyses adenosine(37) in tRNA1(Val) + S-adenosyl-L-methionine = N(6)-methyladenosine(37) in tRNA1(Val) + S-adenosyl-L-homocysteine + H(+). Its function is as follows. Specifically methylates the adenine in position 37 of tRNA(1)(Val) (anticodon cmo5UAC). This chain is tRNA1(Val) (adenine(37)-N6)-methyltransferase, found in Vibrio parahaemolyticus serotype O3:K6 (strain RIMD 2210633).